We begin with the raw amino-acid sequence, 793 residues long: Probable phosphoketolase (793 aa).

Belongs to the XFP family. Thiamine diphosphate serves as cofactor.

This Rhodopirellula baltica (strain DSM 10527 / NCIMB 13988 / SH1) protein is Probable phosphoketolase.